The following is a 115-amino-acid chain: Large ribosomal subunit protein bL20 (115 aa).

Belongs to the bacterial ribosomal protein bL20 family.

Functionally, binds directly to 23S ribosomal RNA and is necessary for the in vitro assembly process of the 50S ribosomal subunit. It is not involved in the protein synthesizing functions of that subunit. The polypeptide is Large ribosomal subunit protein bL20 (Chlorobium limicola (strain DSM 245 / NBRC 103803 / 6330)).